The primary structure comprises 143 residues: HTH-type transcriptional regulator BudR (143 aa).

Residues 1–58 (MELRYLRYFVAVARERHFTRAAKALGISQPPLSQQIKRLEEEVGTPLFRRLTRGVELT) enclose the HTH lysR-type domain. A DNA-binding region (H-T-H motif) is located at residues 18–37 (FTRAAKALGISQPPLSQQIK).

This sequence belongs to the LysR transcriptional regulatory family.

Its function is as follows. Regulator of the budABC operon for 2,3-butanediol synthesis. This chain is HTH-type transcriptional regulator BudR (budR), found in Klebsiella aerogenes (Enterobacter aerogenes).